We begin with the raw amino-acid sequence, 278 residues long: 3-methyl-2-oxobutanoate hydroxymethyltransferase (278 aa).

The Mg(2+) site is built by Asp44 and Asp83. Residues 44–45 (DS), Asp83, and Lys112 each bind 3-methyl-2-oxobutanoate. Residue Glu114 coordinates Mg(2+). Glu181 functions as the Proton acceptor in the catalytic mechanism.

The protein belongs to the PanB family. Homodecamer; pentamer of dimers. The cofactor is Mg(2+).

It localises to the cytoplasm. It carries out the reaction 3-methyl-2-oxobutanoate + (6R)-5,10-methylene-5,6,7,8-tetrahydrofolate + H2O = 2-dehydropantoate + (6S)-5,6,7,8-tetrahydrofolate. It participates in cofactor biosynthesis; (R)-pantothenate biosynthesis; (R)-pantoate from 3-methyl-2-oxobutanoate: step 1/2. Functionally, catalyzes the reversible reaction in which hydroxymethyl group from 5,10-methylenetetrahydrofolate is transferred onto alpha-ketoisovalerate to form ketopantoate. This chain is 3-methyl-2-oxobutanoate hydroxymethyltransferase, found in Roseiflexus sp. (strain RS-1).